The following is a 499-amino-acid chain: Ribose import ATP-binding protein RbsA (499 aa).

2 consecutive ABC transporter domains span residues 3-240 (VEMS…VGRE) and 250-494 (LEPG…TGGD). Position 35–42 (35–42 (GENGAGKS)) interacts with ATP.

It belongs to the ABC transporter superfamily. Ribose importer (TC 3.A.1.2.1) family. As to quaternary structure, the complex is composed of an ATP-binding protein (RbsA), two transmembrane proteins (RbsC) and a solute-binding protein (RbsB).

It localises to the cell membrane. It carries out the reaction D-ribose(out) + ATP + H2O = D-ribose(in) + ADP + phosphate + H(+). Functionally, part of the ABC transporter complex RbsABC involved in ribose import. Responsible for energy coupling to the transport system. The polypeptide is Ribose import ATP-binding protein RbsA (Shouchella clausii (strain KSM-K16) (Alkalihalobacillus clausii)).